The sequence spans 328 residues: Cysteine proteinase COT44 (328 aa).

A propeptide spans 1 to 99 (MSIYLRWSLE…KYSAAVNVDE (99 aa)) (activation peptide). N-linked (GlcNAc...) asparagine glycans are attached at residues N48 and N60. 3 cysteine pairs are disulfide-bonded: C121/C163, C155/C196, and C254/C305. C124 is an active-site residue. Active-site residues include H260 and N280.

Belongs to the peptidase C1 family. In terms of tissue distribution, present in both cotyledons and axes.

Its function is as follows. May function in an early event in cortical cell differentiation. The sequence is that of Cysteine proteinase COT44 from Brassica napus (Rape).